Consider the following 209-residue polypeptide: Endoplasmic reticulum vesicle protein 25 (209 aa).

The N-terminal stretch at 1–18 (MKYTTFGIISLFLSVTWA) is a signal peptide. Residues 19-178 (LRFELAASFE…TNESTNRRVR (160 aa)) are Lumenal-facing. The 89-residue stretch at 31–119 (PFCIRDFVEA…MRNVEVNIES (89 aa)) folds into the GOLD domain. Residues 179–199 (NFSMAVIVVFAALCAWQLNYL) form a helical membrane-spanning segment. The Cytoplasmic portion of the chain corresponds to 200–209 (KNYFRAKHII).

The protein belongs to the EMP24/GP25L family.

The protein localises to the endoplasmic reticulum membrane. It localises to the golgi apparatus membrane. Functionally, constituent of COPII-coated endoplasmic reticulum-derived transport vesicles. Required for efficient transport of a subset of secretory proteins to the Golgi. Facilitates retrograde transport from the Golgi to the endoplasmic reticulum. This chain is Endoplasmic reticulum vesicle protein 25 (ERV25), found in Eremothecium gossypii (strain ATCC 10895 / CBS 109.51 / FGSC 9923 / NRRL Y-1056) (Yeast).